A 219-amino-acid polypeptide reads, in one-letter code: Protein YNG1 (219 aa).

The PHD-type; degenerate zinc finger occupies 155–204 (EVYCFCRNVSYGPMVACDNPACPFEWFHYGCVGLKQAPKGKWYCSKDCKE). Residues C158, C160, C171, C176, H182, C185, C198, and C202 each coordinate Zn(2+).

Belongs to the ING family. Component of the NuA3 histone acetyltransferase (HAT) complex. The NuA3 HAT complex has 2 functionally distinct forms that participate in transcription. The NuA3a HAT complex is composed of at least NTO1, SAS3, TAF14, YNG1 and EAF6. The NuA3b HAT complex contains an additional subunit, PDP3. Interacts with H3K4me3 and to a lesser extent with H3K4me2.

The protein resides in the nucleus. In terms of biological role, histone-binding component of the NuA3a histone acetyltransferase complex. Targets the NuA3a HAT complex via histone H3K4me3 to facilitate transcription initiation at promoter regions. SAS3 then acetylates H3K14, leading to transcription initiation at a subset of genes. YNG1 is required for the HAT activity of NuA3 but not for its integrity. Mediates the interaction of SAS3 with nucleosomes. This is Protein YNG1 (YNG1) from Saccharomyces cerevisiae (strain ATCC 204508 / S288c) (Baker's yeast).